The primary structure comprises 269 residues: Tryptophan synthase alpha chain (269 aa).

Residues glutamate 49 and aspartate 60 each act as proton acceptor in the active site.

It belongs to the TrpA family. As to quaternary structure, tetramer of two alpha and two beta chains.

The enzyme catalyses (1S,2R)-1-C-(indol-3-yl)glycerol 3-phosphate + L-serine = D-glyceraldehyde 3-phosphate + L-tryptophan + H2O. It participates in amino-acid biosynthesis; L-tryptophan biosynthesis; L-tryptophan from chorismate: step 5/5. Its function is as follows. The alpha subunit is responsible for the aldol cleavage of indoleglycerol phosphate to indole and glyceraldehyde 3-phosphate. The chain is Tryptophan synthase alpha chain from Acidovorax sp. (strain JS42).